The following is a 276-amino-acid chain: Rhomboid protease GlpG (276 aa).

Transmembrane regions (helical) follow at residues 94–114 (GPFT…QNLL), 142–162 (AFMH…WYLG), 169–189 (IGSG…GFVQ), 192–212 (FSGP…GYVW), 229–249 (LILF…GMAI), and 252–272 (GAHV…TLHG). Catalysis depends on Ser-201, which acts as the Nucleophile. Residue His-254 is part of the active site.

The protein belongs to the peptidase S54 family.

Its subcellular location is the cell inner membrane. The catalysed reaction is Cleaves type-1 transmembrane domains using a catalytic dyad composed of serine and histidine that are contributed by different transmembrane domains.. Functionally, rhomboid-type serine protease that catalyzes intramembrane proteolysis. This is Rhomboid protease GlpG from Klebsiella pneumoniae subsp. pneumoniae (strain ATCC 700721 / MGH 78578).